The chain runs to 129 residues: Large ribosomal subunit protein bL17 (129 aa).

This sequence belongs to the bacterial ribosomal protein bL17 family. In terms of assembly, part of the 50S ribosomal subunit. Contacts protein L32.

This chain is Large ribosomal subunit protein bL17, found in Thiobacillus denitrificans (strain ATCC 25259 / T1).